The primary structure comprises 419 residues: Metacaspase-1B (419 aa).

The segment at 1–109 is disordered; it reads MYHPNYNYPP…PPMEAQQFGK (109 aa). The span at 33–50 shows a compositional bias: pro residues; the sequence is SPPPPQPYYSNGYPPPSQ. A compositionally biased stretch (low complexity) spans 51–66; that stretch reads SPHSYSPPQYPPHGQY. A compositionally biased stretch (polar residues) spans 82 to 93; sequence QYRSYHSHSPSW. Active-site residues include histidine 210 and cysteine 266.

This sequence belongs to the peptidase C14B family.

Functionally, involved in cell death (apoptosis). The polypeptide is Metacaspase-1B (casB) (Aspergillus oryzae (strain ATCC 42149 / RIB 40) (Yellow koji mold)).